The sequence spans 283 residues: Ribosome biogenesis GTPase A (283 aa).

One can recognise a CP-type G domain in the interval 14–178 (RREVTEKLKL…LLDTPGILWP (165 aa)). Residues 58 to 61 (NKAD), 86 to 87 (NS), 130 to 135 (NVGKST), and glycine 174 each bind GTP.

Belongs to the TRAFAC class YlqF/YawG GTPase family. MTG1 subfamily. As to quaternary structure, interacts with ctc. Interacts with the immature 50S ribosome subunit. 2 molecules of rbgA bind to one 50S subunit.

The protein resides in the cytoplasm. Functionally, essential protein that is required for a late step of 50S ribosomal subunit assembly. Has GTPase activity that is stimulated by interaction with the immature 50S ribosome subunit. Binds to the 23S rRNA. Required for the association of ribosomal proteins rplP and rpmA with the large subunit. The protein is Ribosome biogenesis GTPase A of Bacillus licheniformis (strain ATCC 14580 / DSM 13 / JCM 2505 / CCUG 7422 / NBRC 12200 / NCIMB 9375 / NCTC 10341 / NRRL NRS-1264 / Gibson 46).